The sequence spans 2025 residues: Pericentriolar material 1 protein (2025 aa).

Residues 1–91 (MATGGGPFEE…TFPHSRYMTQ (91 aa)) are disordered. Ala-2 is subject to N-acetylalanine. A mediates interaction with DZIP1 region spans residues 2–1458 (ATGGGPFEEV…TWVASNSELT (1457 aa)). Phosphoserine occurs at positions 65, 68, 69, 93, 110, 116, 119, and 159. Residues 111-140 (DLDQRSIGSDSQGRATAANNKRQLSENRKP) form a disordered region. Over residues 116–132 (SIGSDSQGRATAANNKR) the composition is skewed to polar residues. A coiled-coil region spans residues 218-301 (KASSMREDLV…QLRALQGRQA (84 aa)). The segment at 354 to 390 (RDSQPPAVPDNRRQAESLSLTREISQSRNPSVSEHLP) is disordered. The segment covering 369 to 385 (ESLSLTREISQSRNPSV) has biased composition (polar residues). Ser-370 carries the post-translational modification Phosphoserine. Phosphoserine; by PLK4 is present on Ser-372. Ser-384 carries the phosphoserine modification. Lys-399 bears the N6-acetyllysine mark. 2 coiled-coil regions span residues 399–426 (KMRV…QHLN) and 492–518 (AEKL…YEQT). Disordered stretches follow at residues 528–553 (ENTK…VTNI) and 565–586 (VNTN…VNSN). Acidic residues predominate over residues 531–540 (KDEETEESEY). At Ser-593 the chain carries Phosphoserine. Positions 620-654 (AHGEDEEEEVEEEGVSGASLSSRRSSLVDEAPEDE) are disordered. Acidic residues predominate over residues 623–633 (EDEEEEVEEEG). The segment covering 634 to 644 (VSGASLSSRRS) has biased composition (low complexity). Ser-644 carries the phosphoserine modification. 2 coiled-coil regions span residues 652–772 (EDEE…PDLQ) and 822–856 (SDMR…GLAE). Thr-857 is modified (phosphothreonine). Ser-859, Ser-864, Ser-867, and Ser-870 each carry phosphoserine. Disordered stretches follow at residues 866 to 885 (RSDG…EKTM) and 913 to 940 (TDEE…NQNS). Over residues 870–879 (SENLCTPQQS) the composition is skewed to polar residues. Position 875 is a phosphothreonine (Thr-875). Ser-957, Ser-974, Ser-985, and Ser-988 each carry phosphoserine. Coiled-coil stretches lie at residues 985–1017 (SELS…CQTL) and 1061–1086 (QLTW…QNQH). Disordered stretches follow at residues 1081-1105 (RQQN…PSSP) and 1149-1213 (FSQN…YDQE). The segment covering 1086-1096 (HPEKPRSKERG) has biased composition (basic and acidic residues). The span at 1149–1169 (FSQNVSTPTEQQQPLAQNPSG) shows a compositional bias: polar residues. Phosphoserine occurs at positions 1182 and 1185. The span at 1189 to 1198 (EKQRNQKQPE) shows a compositional bias: basic and acidic residues. A phosphoserine mark is found at Ser-1228, Ser-1254, Ser-1257, Ser-1259, and Ser-1260. The tract at residues 1230–1310 (EKATNSNRKN…STQLKSRVKN (81 aa)) is disordered. Positions 1268-1285 (TTVTKTFKTRKASAQASL) are enriched in polar residues. Residues Ser-1315 and Ser-1317 each carry the phosphoserine modification. The tract at residues 1319-1338 (SSTCEPCKNRNRHSAQTEEP) is disordered. Thr-1466 is subject to Phosphothreonine. 7 positions are modified to phosphoserine: Ser-1571, Ser-1695, Ser-1729, Ser-1766, Ser-1769, Ser-1777, and Ser-1783. The disordered stretch occupies residues 1720–1943 (KRILEGDHGS…AGSPDTESPV (224 aa)). Positions 1756-1768 (YDAKGPKNVRSDV) are enriched in basic and acidic residues. Polar residues predominate over residues 1784–1798 (INLSKAESQALTNYG). Residues 1800–1816 (GEDENEDEEMEDFEESP) are compositionally biased toward acidic residues. Composition is skewed to polar residues over residues 1818-1828 (DIQTSLQANTE), 1849-1858 (ESTNVPSDQE), 1879-1901 (ENEQ…SSKQ), and 1925-1934 (AQETPESSLA). 2 positions are modified to phosphoserine: Ser-1959 and Ser-1978.

It belongs to the PCM1 family. Self-associates. Interacts with BBS4, BBS8, CETN3, HAP1, NDE1, NDEL1, MAP1LC3B, GABARAPAL2, and GABARAP. Interacts with CEP131; the interaction increases in response to ultraviolet light (UV) radiation. Associates with microtubule; association to microtubule is reduced in response to cellular stress, such as ultraviolet light (UV) radiation or heat shock, in a process that requires p38 MAP kinase signaling. Interacts with C2CD3. Interacts with CFAP263. Interacts with SSX2IP. Interacts with CCDC13. Interacts with CEP290. Interacts with PARD6A. Interacts with KIAA0753/OFIP, CEP20/FOR20 and OFD1; the interaction with CEP20/FOR20 and OFD1 may be mediated by KIAA0753/OFIP. Interacts with CCDC66. Interacts with CCDC61. Interacts with DZIP1; localizes DZIP1 and the associated BBSome to centriolar satellite. Interacts with CSTPP1, TTLL1, TPGS1 and LRRC49. Interacts with CFAP53. Post-translationally, ubiquitinated. Undergoes monoubiquitination catalyzed by the E3 ubiquitin-protein ligase MIB1 in proliferating cells, preventing cilia formation. Monoubiquitination by MIB1 is inhibited in response to cellular stress, such as ultraviolet light (UV) radiation or heat shock, resulting in cilia formation initiation. Phosphorylated on multiple serine and threonine residues by DYRK3 during the G2-to-M transition, after the nuclear-envelope breakdown. Phosphorylation by DYRK3 promotes disassembly of pericentriolar material. Phosphorylation at Ser-372 mediated by PLK4 is required to maintain the integrity of centriolar satellites. In terms of tissue distribution, expressed in the hippocampus and dentate gyrus, the columnar epithelial cells of bronchioles, the olfactory epithelium, the pericardium and the inner segment of the retina.

The protein resides in the cytoplasm. Its subcellular location is the cytoskeleton. It localises to the microtubule organizing center. It is found in the centrosome. The protein localises to the cytoplasmic granule. The protein resides in the centriolar satellite. Its subcellular location is the cilium basal body. In terms of biological role, required for centrosome assembly and function. Essential for the correct localization of several centrosomal proteins including CEP250, CETN3, PCNT and NEK2. Required to anchor microtubules to the centrosome. Also involved in cilium biogenesis by recruiting the BBSome, a ciliary protein complex involved in cilium biogenesis, to the centriolar satellites. Recruits the tubulin polyglutamylase complex (TPGC) to centriolar satellites. The protein is Pericentriolar material 1 protein of Mus musculus (Mouse).